The chain runs to 435 residues: AMSH-like protease sst2 (435 aa).

A compositionally biased stretch (low complexity) spans 162–181 (TDLLSPDSQKLSKSSSDLPQ). Positions 162–185 (TDLLSPDSQKLSKSSSDLPQFDYP) are disordered. The residue at position 192 (threonine 192) is a Phosphothreonine. Residues 262-392 (TIYLPKLLKK…FRLLDPEGLQ (131 aa)) form the MPN domain. Residues histidine 341, histidine 343, aspartate 354, histidine 356, cysteine 397, histidine 404, and histidine 406 each coordinate Zn(2+). A JAMM motif motif is present at residues 341–354 (HTHPTQTCFMSSVD).

Belongs to the peptidase M67C family. Zn(2+) is required as a cofactor.

The protein resides in the cytoplasm. It is found in the endosome. In terms of biological role, zinc metalloprotease that specifically cleaves 'Lys-63'-linked polyubiquitin chains. Does not cleave 'Lys-48'-linked polyubiquitin chains. Plays a role in the multivesicular body (MVB) sorting pathway. Required for ubiquitin-dependent sorting of proteins into the endosome and subsequent trafficking to the vacuole. May regulate MVB sorting through deubiquitination of ubiquitinated ESCRT proteins. The polypeptide is AMSH-like protease sst2 (sst2) (Schizosaccharomyces pombe (strain 972 / ATCC 24843) (Fission yeast)).